Here is an 847-residue protein sequence, read N- to C-terminus: Protein HIR2 (847 aa).

WD repeat units follow at residues 10–46 (LHDG…NAAT), 113–153 (KDNE…LKSS), 155–194 (ELKS…TTKL), 259–305 (KFSP…PLFD), and 309–348 (VVNS…LGDV). The interval 368 to 399 (PFKPKAEEPDTKLPPNKTAQQTTTNSKKQPKA) is disordered. Residues 384 to 394 (KTAQQTTTNSK) show a composition bias toward polar residues. WD repeat units lie at residues 508–548 (RKDN…IYVT) and 558–597 (PMLL…IAFP).

The protein belongs to the WD repeat HIR1 family.

It is found in the nucleus. In terms of biological role, required for replication-independent chromatin assembly and for the periodic repression of histone gene transcription during the cell cycle. The polypeptide is Protein HIR2 (HIR2) (Kluyveromyces lactis (strain ATCC 8585 / CBS 2359 / DSM 70799 / NBRC 1267 / NRRL Y-1140 / WM37) (Yeast)).